The sequence spans 619 residues: Dihydroxy-acid dehydratase (619 aa).

D81 provides a ligand contact to Mg(2+). Residue C122 participates in [2Fe-2S] cluster binding. Mg(2+) contacts are provided by D123 and K124. K124 is subject to N6-carboxylysine. Residue C195 participates in [2Fe-2S] cluster binding. E491 contacts Mg(2+). S517 serves as the catalytic Proton acceptor.

Belongs to the IlvD/Edd family. In terms of assembly, homodimer. [2Fe-2S] cluster serves as cofactor. The cofactor is Mg(2+).

It carries out the reaction (2R)-2,3-dihydroxy-3-methylbutanoate = 3-methyl-2-oxobutanoate + H2O. The catalysed reaction is (2R,3R)-2,3-dihydroxy-3-methylpentanoate = (S)-3-methyl-2-oxopentanoate + H2O. The protein operates within amino-acid biosynthesis; L-isoleucine biosynthesis; L-isoleucine from 2-oxobutanoate: step 3/4. It functions in the pathway amino-acid biosynthesis; L-valine biosynthesis; L-valine from pyruvate: step 3/4. In terms of biological role, functions in the biosynthesis of branched-chain amino acids. Catalyzes the dehydration of (2R,3R)-2,3-dihydroxy-3-methylpentanoate (2,3-dihydroxy-3-methylvalerate) into 2-oxo-3-methylpentanoate (2-oxo-3-methylvalerate) and of (2R)-2,3-dihydroxy-3-methylbutanoate (2,3-dihydroxyisovalerate) into 2-oxo-3-methylbutanoate (2-oxoisovalerate), the penultimate precursor to L-isoleucine and L-valine, respectively. The chain is Dihydroxy-acid dehydratase from Rhodopseudomonas palustris (strain HaA2).